A 471-amino-acid chain; its full sequence is Replication factor C large subunit (471 aa).

44–51 (GSPGIGKT) serves as a coordination point for ATP. A compositionally biased stretch (basic and acidic residues) spans 422–431 (RTDAAVDHSE). Residues 422 to 471 (RTDAAVDHSEGAFAGAVREDNTDEDSAADETTDGDEDTGADSQRGLDEFF) are disordered. Positions 442–460 (NTDEDSAADETTDGDEDTG) are enriched in acidic residues.

Belongs to the activator 1 small subunits family. RfcL subfamily. As to quaternary structure, heteromultimer composed of small subunits (RfcS) and large subunits (RfcL).

In terms of biological role, part of the RFC clamp loader complex which loads the PCNA sliding clamp onto DNA. This is Replication factor C large subunit from Halobacterium salinarum (strain ATCC 29341 / DSM 671 / R1).